The following is a 521-amino-acid chain: Cell cycle checkpoint protein hpr-9 (521 aa).

Disordered stretches follow at residues 1–20 (MQAI…TRER), 318–375 (QHEE…NRFV), and 492–521 (GTET…YESR). Composition is skewed to polar residues over residues 355–370 (ESLS…SLPS) and 493–504 (TETTSKMRMSQQ).

The protein belongs to the rad9 family. As to quaternary structure, putative component of the toroidal 9-1-1 (RAD9-RAD1-HUS1) complex, composed of hpr-9, mrt-2 and hus-1.

Its function is as follows. May be a component of the 9-1-1 cell-cycle checkpoint response complex that plays a major role in DNA repair. This chain is Cell cycle checkpoint protein hpr-9, found in Caenorhabditis elegans.